The chain runs to 393 residues: Outer membrane protein assembly factor BamB (393 aa).

An N-terminal signal peptide occupies residues M1–G19. C20 carries the N-palmitoyl cysteine lipid modification. C20 is lipidated: S-diacylglycerol cysteine.

It belongs to the BamB family. Part of the Bam complex, which is composed of the outer membrane protein BamA, and four lipoproteins BamB, BamC, BamD and BamE.

It is found in the cell outer membrane. Functionally, part of the outer membrane protein assembly complex, which is involved in assembly and insertion of beta-barrel proteins into the outer membrane. In Yersinia pestis, this protein is Outer membrane protein assembly factor BamB.